Here is a 372-residue protein sequence, read N- to C-terminus: GTP cyclohydrolase 1 type 2 homolog (372 aa).

5 residues coordinate a divalent metal cation: histidine 67, histidine 68, aspartate 106, histidine 332, and glutamate 335.

The protein belongs to the GTP cyclohydrolase I type 2/NIF3 family. As to quaternary structure, homohexamer.

This Halalkalibacterium halodurans (strain ATCC BAA-125 / DSM 18197 / FERM 7344 / JCM 9153 / C-125) (Bacillus halodurans) protein is GTP cyclohydrolase 1 type 2 homolog.